Reading from the N-terminus, the 124-residue chain is uncharacterized protein (124 aa).

It is found in the cytoplasm. It localises to the nucleus. This is an uncharacterized protein from Schizosaccharomyces pombe (strain 972 / ATCC 24843) (Fission yeast).